Here is a 308-residue protein sequence, read N- to C-terminus: D-alanine--D-alanine ligase (308 aa).

The ATP-grasp domain maps to 105–302 (KAIFRSLGLA…FPDLCERILD (198 aa)). Residue 133–188 (DLPFGLPCVVKPAGEGSSVGVHLVNEAAELGPACRDAASHAGDVIVERYVKGTEVD) participates in ATP binding. Aspartate 256, glutamate 269, and asparagine 271 together coordinate Mg(2+).

It belongs to the D-alanine--D-alanine ligase family. The cofactor is Mg(2+). Requires Mn(2+) as cofactor.

It is found in the cytoplasm. The catalysed reaction is 2 D-alanine + ATP = D-alanyl-D-alanine + ADP + phosphate + H(+). The protein operates within cell wall biogenesis; peptidoglycan biosynthesis. In terms of biological role, cell wall formation. This Anaeromyxobacter dehalogenans (strain 2CP-1 / ATCC BAA-258) protein is D-alanine--D-alanine ligase.